The sequence spans 603 residues: Prostaglandin G/H synthase 2 (603 aa).

The signal sequence occupies residues 1–17 (MLLPCALLAALLAAGHA). One can recognise an EGF-like domain in the interval 18 to 55 (ANPCCSLPCQNRGVCMTTGFDRYECDCTRTGYYGENCT). Intrachain disulfides connect C21-C32, C22-C145, C26-C42, and C44-C54. N-linked (GlcNAc...) asparagine glycosylation is found at N53 and N90. Residue R106 coordinates substrate. N130 carries an N-linked (GlcNAc...) asparagine glycan. The active-site Proton acceptor is H193. Y341 is a substrate binding site. Y371 acts as the For cyclooxygenase activity in catalysis. H374 contacts heme b. C555 and C561 are joined by a disulfide.

Belongs to the prostaglandin G/H synthase family. As to quaternary structure, homodimer. The cofactor is heme b.

The protein localises to the microsome membrane. It is found in the endoplasmic reticulum membrane. The enzyme catalyses (5Z,8Z,11Z,14Z)-eicosatetraenoate + AH2 + 2 O2 = prostaglandin H2 + A + H2O. The catalysed reaction is (9Z,12Z)-octadecadienoate + AH2 + O2 = (9R)-hydroxy-(10E,12Z)-octadecadienoate + A + H2O. It catalyses the reaction (9Z,12Z)-octadecadienoate + AH2 + O2 = (9S)-hydroxy-(10E,12Z)-octadecadienoate + A + H2O. It carries out the reaction (9Z,12Z)-octadecadienoate + AH2 + O2 = (13S)-hydroxy-(9Z,11E)-octadecadienoate + A + H2O. The enzyme catalyses (9Z,12Z)-octadecadienoate + AH2 + O2 = (13R)-hydroxy-(9Z,11E)-octadecadienoate + A + H2O. Its pathway is lipid metabolism; prostaglandin biosynthesis. Dual cyclooxygenase and peroxidase in the biosynthesis pathway of prostanoids, a class of C20 oxylipins mainly derived from arachidonate ((5Z,8Z,11Z,14Z)-eicosatetraenoate, AA, C20:4(n-6)), with a particular role in the inflammatory response. The cyclooxygenase activity oxygenates AA to the hydroperoxy endoperoxide prostaglandin G2 (PGG2), and the peroxidase activity reduces PGG2 to the hydroxy endoperoxide prostaglandin H2 (PGH2), the precursor of all 2-series prostaglandins and thromboxanes. This complex transformation is initiated by abstraction of hydrogen at carbon 13 (with S-stereochemistry), followed by insertion of molecular O2 to form the endoperoxide bridge between carbon 9 and 11 that defines prostaglandins. The insertion of a second molecule of O2 (bis-oxygenase activity) yields a hydroperoxy group in PGG2 that is then reduced to PGH2 by two electrons. Similarly catalyzes successive cyclooxygenation and peroxidation of dihomo-gamma-linoleate (DGLA, C20:3(n-6)) and eicosapentaenoate (EPA, C20:5(n-3)) to corresponding PGH1 and PGH3, the precursors of 1- and 3-series prostaglandins. In an alternative pathway of prostanoid biosynthesis, converts 2-arachidonoyl lysophopholipids to prostanoid lysophopholipids, which are then hydrolyzed by intracellular phospholipases to release free prostanoids. Metabolizes 2-arachidonoyl glycerol yielding the glyceryl ester of PGH2, a process that can contribute to pain response. Generates lipid mediators from n-3 and n-6 polyunsaturated fatty acids (PUFAs) via a lipoxygenase-type mechanism. Oxygenates PUFAs to hydroperoxy compounds and then reduces them to corresponding alcohols. Plays a role in the generation of resolution phase interaction products (resolvins) during both sterile and infectious inflammation. Metabolizes docosahexaenoate (DHA, C22:6(n-3)) to 17R-HDHA, a precursor of the D-series resolvins (RvDs). As a component of the biosynthetic pathway of E-series resolvins (RvEs), converts eicosapentaenoate (EPA, C20:5(n-3)) primarily to 18S-HEPE that is further metabolized by ALOX5 and LTA4H to generate 18S-RvE1 and 18S-RvE2. In vascular endothelial cells, converts docosapentaenoate (DPA, C22:5(n-3)) to 13R-HDPA, a precursor for 13-series resolvins (RvTs) shown to activate macrophage phagocytosis during bacterial infection. In activated leukocytes, contributes to oxygenation of hydroxyeicosatetraenoates (HETE) to diHETES (5,15-diHETE and 5,11-diHETE). Can also use linoleate (LA, (9Z,12Z)-octadecadienoate, C18:2(n-6)) as substrate and produce hydroxyoctadecadienoates (HODEs) in a regio- and stereospecific manner, being (9R)-HODE ((9R)-hydroxy-(10E,12Z)-octadecadienoate) and (13S)-HODE ((13S)-hydroxy-(9Z,11E)-octadecadienoate) its major products. During neuroinflammation, plays a role in neuronal secretion of specialized preresolving mediators (SPMs) 15R-lipoxin A4 that regulates phagocytic microglia. In Gallus gallus (Chicken), this protein is Prostaglandin G/H synthase 2 (PTGS2).